Reading from the N-terminus, the 118-residue chain is MTKNIHDVAYELQKAIAENDDFKTLKESYAAVQADAASKNLFDEFRTMQLSLQQKMMQGQEITEEDNQQAQEVVVRIQQDAKITKLMETEQRLNVVIGDVNKIIMKPLEELYSAQQQV.

This sequence belongs to the UPF0342 family.

This is UPF0342 protein BAMEG_3696 from Bacillus anthracis (strain CDC 684 / NRRL 3495).